Consider the following 270-residue polypeptide: Hydroxyethylthiazole kinase (270 aa).

Met-46 is a substrate binding site. ATP contacts are provided by Arg-120 and Thr-166. Gly-193 provides a ligand contact to substrate.

Belongs to the Thz kinase family. Mg(2+) serves as cofactor.

It carries out the reaction 5-(2-hydroxyethyl)-4-methylthiazole + ATP = 4-methyl-5-(2-phosphooxyethyl)-thiazole + ADP + H(+). It functions in the pathway cofactor biosynthesis; thiamine diphosphate biosynthesis; 4-methyl-5-(2-phosphoethyl)-thiazole from 5-(2-hydroxyethyl)-4-methylthiazole: step 1/1. Functionally, catalyzes the phosphorylation of the hydroxyl group of 4-methyl-5-beta-hydroxyethylthiazole (THZ). In Herpetosiphon aurantiacus (strain ATCC 23779 / DSM 785 / 114-95), this protein is Hydroxyethylthiazole kinase.